The following is a 351-amino-acid chain: Peptide chain release factor 1 (351 aa).

An N5-methylglutamine modification is found at Gln229. The tract at residues 279–300 is disordered; the sequence is ADAERAADRKSQVGSGDRSERI.

It belongs to the prokaryotic/mitochondrial release factor family. Post-translationally, methylated by PrmC. Methylation increases the termination efficiency of RF1.

It is found in the cytoplasm. Peptide chain release factor 1 directs the termination of translation in response to the peptide chain termination codons UAG and UAA. The chain is Peptide chain release factor 1 from Paracoccus denitrificans (strain Pd 1222).